Here is a 340-residue protein sequence, read N- to C-terminus: NADH-quinone oxidoreductase subunit H (340 aa).

8 helical membrane passes run 4–24, 78–98, 113–133, 151–171, 184–204, 244–264, 273–293, and 316–336; these read TIGI…PLLI, YLFV…WAVI, VLYL…AGWA, VSYE…AGSM, MLHW…ISGI, SMIL…LSPF, IFFI…FLFV, and VLIP…VAHV.

This sequence belongs to the complex I subunit 1 family. NDH-1 is composed of 14 different subunits. Subunits NuoA, H, J, K, L, M, N constitute the membrane sector of the complex.

The protein resides in the cell inner membrane. It catalyses the reaction a quinone + NADH + 5 H(+)(in) = a quinol + NAD(+) + 4 H(+)(out). Its function is as follows. NDH-1 shuttles electrons from NADH, via FMN and iron-sulfur (Fe-S) centers, to quinones in the respiratory chain. The immediate electron acceptor for the enzyme in this species is believed to be ubiquinone. Couples the redox reaction to proton translocation (for every two electrons transferred, four hydrogen ions are translocated across the cytoplasmic membrane), and thus conserves the redox energy in a proton gradient. This subunit may bind ubiquinone. The protein is NADH-quinone oxidoreductase subunit H of Legionella pneumophila (strain Lens).